Here is a 246-residue protein sequence, read N- to C-terminus: 1-(5-phosphoribosyl)-5-[(5-phosphoribosylamino)methylideneamino] imidazole-4-carboxamide isomerase (246 aa).

Asp-8 (proton acceptor) is an active-site residue. Asp-129 (proton donor) is an active-site residue.

It belongs to the HisA/HisF family.

It is found in the cytoplasm. It catalyses the reaction 1-(5-phospho-beta-D-ribosyl)-5-[(5-phospho-beta-D-ribosylamino)methylideneamino]imidazole-4-carboxamide = 5-[(5-phospho-1-deoxy-D-ribulos-1-ylimino)methylamino]-1-(5-phospho-beta-D-ribosyl)imidazole-4-carboxamide. Its pathway is amino-acid biosynthesis; L-histidine biosynthesis; L-histidine from 5-phospho-alpha-D-ribose 1-diphosphate: step 4/9. This is 1-(5-phosphoribosyl)-5-[(5-phosphoribosylamino)methylideneamino] imidazole-4-carboxamide isomerase from Nitrobacter hamburgensis (strain DSM 10229 / NCIMB 13809 / X14).